We begin with the raw amino-acid sequence, 940 residues long: Serine/threonine-protein phosphatase 1 regulatory subunit 10 (940 aa).

The tract at residues 1 to 348 (MGSGPIDPKE…EPAPPSEAME (348 aa)) is interaction with TOX4. Residues 73-147 (KLLNNWLTYS…SDWMAVIRSQ (75 aa)) enclose the TFIIS N-terminal domain. Disordered regions lie at residues 147–210 (QSST…KFRS), 248–270 (NVAA…NTTP), 304–400 (KIKK…KSVT), and 534–557 (VETL…LPPV). Basic and acidic residues-rich tracts occupy residues 153-166 (AEKD…EGKS) and 174-196 (PLTE…EKPK). Residue Lys179 forms a Glycyl lysine isopeptide (Lys-Gly) (interchain with G-Cter in SUMO2) linkage. Position 256 is a phosphothreonine (Thr256). Lys262 is covalently cross-linked (Glycyl lysine isopeptide (Lys-Gly) (interchain with G-Cter in SUMO2)). Residue Ser313 is modified to Phosphoserine. Positions 325 to 336 (KTSTEPSTAKPS) are enriched in low complexity. Positions 357–433 (PPVEVPELMD…NKIKDFGEAA (77 aa)) are necessary for interaction with PPP1CA. Ser382 is subject to Phosphoserine. Positions 393-408 (GRKRKSVTWPEEGKLR) are necessary for interaction with PPP1CC. The short motif at 394 to 423 (RKRKSVTWPEEGKLREYFYFELDETERVNV) is the PP1-binding motif element. Ser398 is subject to Phosphoserine; by PKA. An interaction with WDR82 region spans residues 418-619 (TERVNVNKIK…IKQMLVPHGL (202 aa)). Positions 540 to 551 (GGSGGSPDGAGG) are enriched in gly residues. Ser545 and Ser591 each carry phosphoserine. A disordered region spans residues 617-905 (HGLLGPGPIA…HDGGHSHGGD (289 aa)). Positions 644-655 (PPGPGGPMPGPH) are enriched in pro residues. Arg665 carries the omega-N-methylarginine modification. Low complexity predominate over residues 676-690 (GDPFWDGPGDPMRGG). Arg693 and Arg738 each carry omega-N-methylarginine. 2 stretches are compositionally biased toward gly residues: residues 725-763 (ARGG…GMGN) and 789-844 (GSMG…GSGG). Basic and acidic residues-rich tracts occupy residues 861–886 (PHDV…HDGP) and 894–903 (RGHDGGHSHG). A C3H1-type zinc finger spans residues 906–934 (MSNRPVCRHFMMKGNCRYENNCAFYHPGV).

Component of the PNUTS-PP1 complex (also named PTW/PP1 complex), composed of PPP1R10/PNUTS, TOX4, WDR82, and PPP1CA (or PPP1CB or PPP1CC). In terms of processing, phosphorylated on Ser-398 by PKA within the region necessary for interaction with PPP1CA.

It is found in the nucleus. The protein localises to the chromosome. Functionally, substrate-recognition component of the PNUTS-PP1 protein phosphatase complex, a protein phosphatase 1 (PP1) complex that promotes RNA polymerase II transcription pause-release, allowing transcription elongation. Promoter-proximal pausing by RNA polymerase II is a transcription halt following transcription initiation but prior to elongation, which acts as a checkpoint to control that transcripts are favorably configured for transcriptional elongation. The PNUTS-PP1 complex mediates the release of RNA polymerase II from promoter-proximal region of genes by catalyzing dephosphorylation of proteins involved in transcription, such as AFF4, CDK9, MEPCE, INTS12, NCBP1, POLR2M/GDOWN1 and SUPT6H. The PNUTS-PP1 complex also regulates RNA polymerase II transcription termination by mediating dephosphorylation of SUPT5H in termination zones downstream of poly(A) sites, thereby promoting deceleration of RNA polymerase II transcription. PNUTS-PP1 complex is also involved in the response to replication stress by mediating dephosphorylation of POLR2A at 'Ser-5' of the CTD, promoting RNA polymerase II degradation. The PNUTS-PP1 complex also plays a role in the control of chromatin structure and cell cycle progression during the transition from mitosis into interphase. PNUTS-PP1 complex mediates dephosphorylation of MYC, promoting MYC stability by preventing MYC ubiquitination by the SCF(FBXW7) complex. In addition to acts as a substrate-recognition component, PPP1R10/PNUTS also acts as a nuclear targeting subunit for the PNUTS-PP1 complex. In some context, PPP1R10/PNUTS also acts as an inhibitor of protein phosphatase 1 (PP1) activity by preventing access to substrates, such as RB. In Pan troglodytes (Chimpanzee), this protein is Serine/threonine-protein phosphatase 1 regulatory subunit 10 (PPP1R10).